We begin with the raw amino-acid sequence, 59 residues long: Small, acid-soluble spore protein H (59 aa).

The protein belongs to the SspH family.

The protein localises to the spore core. The chain is Small, acid-soluble spore protein H from Alkaliphilus metalliredigens (strain QYMF).